A 453-amino-acid polypeptide reads, in one-letter code: Cholecystokinin receptor (453 aa).

Over 1–64 (MESLRSLSNI…ILDRKKPSPS (64 aa)) the chain is Extracellular. N-linked (GlcNAc...) asparagine glycosylation is found at N9, N22, N30, N35, and N39. The chain crosses the membrane as a helical span at residues 65-94 (DLNLWVRIVMYSVIFLLSVFGNTLIIIVLV). The Cytoplasmic portion of the chain corresponds to 95-104 (MNKRLRTITN). A helical membrane pass occupies residues 105–131 (SFLLSLALSDLMVAVLCMPFTLIPNLM). Residues 132-142 (ENFIFGEVICR) lie on the Extracellular side of the membrane. A disulfide bridge connects residues C141 and C223. Residues 143–164 (AAAYFMGLSVSVSTFNLVAISI) form a helical membrane-spanning segment. The Cytoplasmic segment spans residues 165–184 (ERYSAICNPLKSRVWQTRSH). A helical membrane pass occupies residues 185–205 (AYRVIAATWVLSSIIMIPYLV). At 206–237 (YNKTVTFPMKDRRVGHQCRLVWPSKQVQQAWY) the chain is on the extracellular side. The chain crosses the membrane as a helical span at residues 238–261 (VLLLTILFFIPGVVMIVAYGLISR). The Cytoplasmic portion of the chain corresponds to 262 to 343 (ELYRGIQFEM…KLMAKKRVIR (82 aa)). The helical transmembrane segment at 344–364 (MLIVIVAMFFICWMPIFVANT) threads the bilayer. Residues 365–379 (WKAFDELSAFNTLTG) are Extracellular-facing. Residues 380–403 (APISFIHLLSYTSACVNPLIYCFM) form a helical membrane-spanning segment. C401 carries S-palmitoyl cysteine lipidation. The Cytoplasmic segment spans residues 404–453 (NKRFRKAFLGTFSSCIKPCRNFRDTDEDIAATGASLSKFSYTTVSSLGPA).

The protein belongs to the G-protein coupled receptor 1 family. In terms of tissue distribution, brain and stomach.

It localises to the cell membrane. In terms of biological role, receptor for cholecystokinin. This receptor mediates its action by association with G proteins that activate a phosphatidylinositol-calcium second messenger system. Has high affinity for CCK-8 and low affinities for gastrin-17-I, CCK-4, and unsulfated CCK-8. This is Cholecystokinin receptor (cckar) from Xenopus laevis (African clawed frog).